A 471-amino-acid polypeptide reads, in one-letter code: Ribulose bisphosphate carboxylase large chain (471 aa).

Residues Asn-115 and Thr-165 each coordinate substrate. The active-site Proton acceptor is the Lys-167. Residue Lys-169 participates in substrate binding. Residues Lys-193, Asp-195, and Glu-196 each contribute to the Mg(2+) site. The residue at position 193 (Lys-193) is an N6-carboxylysine. His-286 (proton acceptor) is an active-site residue. Positions 287, 319, and 371 each coordinate substrate.

The protein belongs to the RuBisCO large chain family. Type I subfamily. Heterohexadecamer of 8 large chains and 8 small chains. Requires Mg(2+) as cofactor.

It carries out the reaction 2 (2R)-3-phosphoglycerate + 2 H(+) = D-ribulose 1,5-bisphosphate + CO2 + H2O. The enzyme catalyses D-ribulose 1,5-bisphosphate + O2 = 2-phosphoglycolate + (2R)-3-phosphoglycerate + 2 H(+). Functionally, ruBisCO catalyzes two reactions: the carboxylation of D-ribulose 1,5-bisphosphate, the primary event in carbon dioxide fixation, as well as the oxidative fragmentation of the pentose substrate. Both reactions occur simultaneously and in competition at the same active site. The chain is Ribulose bisphosphate carboxylase large chain from Alvinoconcha hessleri symbiotic bacterium.